Consider the following 195-residue polypeptide: UPF0301 protein CCNA_03506 (195 aa).

It belongs to the UPF0301 (AlgH) family.

The protein is UPF0301 protein CCNA_03506 of Caulobacter vibrioides (strain NA1000 / CB15N) (Caulobacter crescentus).